Reading from the N-terminus, the 493-residue chain is 3-octaprenyl-4-hydroxybenzoate carboxy-lyase (493 aa).

Position 172 (N172) interacts with Mn(2+). Residues I175–R177, R189–L191, and R194–G195 contribute to the prenylated FMN site. E238 provides a ligand contact to Mn(2+). D287 acts as the Proton donor in catalysis.

It belongs to the UbiD family. In terms of assembly, homohexamer. Prenylated FMN serves as cofactor. The cofactor is Mn(2+).

Its subcellular location is the cell membrane. The enzyme catalyses a 4-hydroxy-3-(all-trans-polyprenyl)benzoate + H(+) = a 2-(all-trans-polyprenyl)phenol + CO2. The protein operates within cofactor biosynthesis; ubiquinone biosynthesis. Catalyzes the decarboxylation of 3-octaprenyl-4-hydroxy benzoate to 2-octaprenylphenol, an intermediate step in ubiquinone biosynthesis. This chain is 3-octaprenyl-4-hydroxybenzoate carboxy-lyase, found in Shewanella pealeana (strain ATCC 700345 / ANG-SQ1).